We begin with the raw amino-acid sequence, 603 residues long: Proline--tRNA ligase (603 aa).

This sequence belongs to the class-II aminoacyl-tRNA synthetase family. ProS type 1 subfamily. As to quaternary structure, homodimer.

The protein resides in the cytoplasm. It catalyses the reaction tRNA(Pro) + L-proline + ATP = L-prolyl-tRNA(Pro) + AMP + diphosphate. Functionally, catalyzes the attachment of proline to tRNA(Pro) in a two-step reaction: proline is first activated by ATP to form Pro-AMP and then transferred to the acceptor end of tRNA(Pro). As ProRS can inadvertently accommodate and process non-cognate amino acids such as alanine and cysteine, to avoid such errors it has two additional distinct editing activities against alanine. One activity is designated as 'pretransfer' editing and involves the tRNA(Pro)-independent hydrolysis of activated Ala-AMP. The other activity is designated 'posttransfer' editing and involves deacylation of mischarged Ala-tRNA(Pro). The misacylated Cys-tRNA(Pro) is not edited by ProRS. The polypeptide is Proline--tRNA ligase (Arthrobacter sp. (strain FB24)).